Here is a 351-residue protein sequence, read N- to C-terminus: Protein arginine N-methyltransferase 1 (351 aa).

One can recognise an SAM-dependent MTase PRMT-type domain in the interval 30–331 (KDYYFDSYAH…KNNRDLDFTV (302 aa)). Histidine 43, arginine 52, glycine 76, glutamate 98, and glutamate 127 together coordinate S-adenosyl-L-methionine. Active-site residues include glutamate 142 and glutamate 151.

The protein belongs to the class I-like SAM-binding methyltransferase superfamily. Protein arginine N-methyltransferase family. Homodimer. Homooctamer; individual homodimers associates to form a homooctamer and homooligomerization is required for proper localization to the cell membrane. Individual homodimers can associate to form a homohexamer. Component of a complex with lsm14a/rap55a. Interacts with cirbp.

The protein localises to the nucleus. Its subcellular location is the nucleoplasm. The protein resides in the cytoplasm. It localises to the cytosol. It carries out the reaction L-arginyl-[protein] + 2 S-adenosyl-L-methionine = N(omega),N(omega)-dimethyl-L-arginyl-[protein] + 2 S-adenosyl-L-homocysteine + 2 H(+). The catalysed reaction is L-arginyl-[protein] + S-adenosyl-L-methionine = N(omega)-methyl-L-arginyl-[protein] + S-adenosyl-L-homocysteine + H(+). It catalyses the reaction N(omega)-methyl-L-arginyl-[protein] + S-adenosyl-L-methionine = N(omega),N(omega)-dimethyl-L-arginyl-[protein] + S-adenosyl-L-homocysteine + H(+). In terms of biological role, arginine methyltransferase that methylates (mono and asymmetric dimethylation) the guanidino nitrogens of arginyl residues present in target proteins. Constitutes the main enzyme that mediates monomethylation and asymmetric dimethylation of histone H4 'Arg-3' (H4R3me1 and H4R3me2a, respectively), a specific tag for epigenetic transcriptional activation. Methylates ilf3 to regulate its DNA-binding activity. Required for neural induction, playing a key role in the control of epidermal versus neural cell fate choice. Methylates cirbp to regulate its subcellular location. Acts transiently during metamorphosis as a transcription coactivator, enhancing thyroid hormone (T3) receptor (TR)-mediated transcription by enhancing TR binding to the T3 response element (TRE), and histone modification through recruitment of other coactivators. This Xenopus tropicalis (Western clawed frog) protein is Protein arginine N-methyltransferase 1.